The following is a 473-amino-acid chain: Photosystem II CP43 reaction center protein (473 aa).

The propeptide occupies 1 to 14 (MKTLYSLRRFYPVE). Thr-15 bears the N-acetylthreonine mark. Phosphothreonine is present on Thr-15. 5 helical membrane-spanning segments follow: residues 69 to 93 (LFEVAHFVPEKPMYEQGLILLPHLA), 134 to 155 (LLGPETLEESFPFFGYVWKDRN), 178 to 200 (KALYFGGVYDTWAPGGGDVRKIT), 255 to 275 (KPFAWARRALVWSGEAYLSYS), and 291 to 312 (WFNNTAYPSEFYGPTGPEASQA). Glu-367 is a [CaMn4O5] cluster binding site. The helical transmembrane segment at 447–471 (RARAAAAGFEKGIDRDFEPVLSMTP) threads the bilayer.

This sequence belongs to the PsbB/PsbC family. PsbC subfamily. As to quaternary structure, PSII is composed of 1 copy each of membrane proteins PsbA, PsbB, PsbC, PsbD, PsbE, PsbF, PsbH, PsbI, PsbJ, PsbK, PsbL, PsbM, PsbT, PsbX, PsbY, PsbZ, Psb30/Ycf12, at least 3 peripheral proteins of the oxygen-evolving complex and a large number of cofactors. It forms dimeric complexes. Binds multiple chlorophylls and provides some of the ligands for the Ca-4Mn-5O cluster of the oxygen-evolving complex. It may also provide a ligand for a Cl- that is required for oxygen evolution. PSII binds additional chlorophylls, carotenoids and specific lipids. is required as a cofactor.

The protein resides in the plastid. Its subcellular location is the chloroplast thylakoid membrane. In terms of biological role, one of the components of the core complex of photosystem II (PSII). It binds chlorophyll and helps catalyze the primary light-induced photochemical processes of PSII. PSII is a light-driven water:plastoquinone oxidoreductase, using light energy to abstract electrons from H(2)O, generating O(2) and a proton gradient subsequently used for ATP formation. The sequence is that of Photosystem II CP43 reaction center protein from Lactuca sativa (Garden lettuce).